The chain runs to 271 residues: Formamidopyrimidine-DNA glycosylase (271 aa).

Pro2 (schiff-base intermediate with DNA) is an active-site residue. Catalysis depends on Glu3, which acts as the Proton donor. Lys56 (proton donor; for beta-elimination activity) is an active-site residue. Residues His89, Arg107, and Lys151 each contribute to the DNA site. Residues 236–270 form an FPG-type zinc finger; sequence NVYGRAGLPCRQCGTPVRLLRQGQRSTYFCPHCQR. Arg260 serves as the catalytic Proton donor; for delta-elimination activity.

The protein belongs to the FPG family. In terms of assembly, monomer. Requires Zn(2+) as cofactor.

It carries out the reaction Hydrolysis of DNA containing ring-opened 7-methylguanine residues, releasing 2,6-diamino-4-hydroxy-5-(N-methyl)formamidopyrimidine.. The enzyme catalyses 2'-deoxyribonucleotide-(2'-deoxyribose 5'-phosphate)-2'-deoxyribonucleotide-DNA = a 3'-end 2'-deoxyribonucleotide-(2,3-dehydro-2,3-deoxyribose 5'-phosphate)-DNA + a 5'-end 5'-phospho-2'-deoxyribonucleoside-DNA + H(+). In terms of biological role, involved in base excision repair of DNA damaged by oxidation or by mutagenic agents. Acts as a DNA glycosylase that recognizes and removes damaged bases. Has a preference for oxidized purines, such as 7,8-dihydro-8-oxoguanine (8-oxoG). Has AP (apurinic/apyrimidinic) lyase activity and introduces nicks in the DNA strand. Cleaves the DNA backbone by beta-delta elimination to generate a single-strand break at the site of the removed base with both 3'- and 5'-phosphates. The protein is Formamidopyrimidine-DNA glycosylase of Acidovorax sp. (strain JS42).